A 220-amino-acid chain; its full sequence is Deoxyribose-phosphate aldolase (220 aa).

The Proton donor/acceptor role is filled by Asp-89. Lys-151 serves as the catalytic Schiff-base intermediate with acetaldehyde. The active-site Proton donor/acceptor is Lys-180.

Belongs to the DeoC/FbaB aldolase family. DeoC type 1 subfamily.

It localises to the cytoplasm. The enzyme catalyses 2-deoxy-D-ribose 5-phosphate = D-glyceraldehyde 3-phosphate + acetaldehyde. It participates in carbohydrate degradation; 2-deoxy-D-ribose 1-phosphate degradation; D-glyceraldehyde 3-phosphate and acetaldehyde from 2-deoxy-alpha-D-ribose 1-phosphate: step 2/2. In terms of biological role, catalyzes a reversible aldol reaction between acetaldehyde and D-glyceraldehyde 3-phosphate to generate 2-deoxy-D-ribose 5-phosphate. In Staphylococcus haemolyticus (strain JCSC1435), this protein is Deoxyribose-phosphate aldolase.